A 534-amino-acid polypeptide reads, in one-letter code: GMP synthase [glutamine-hydrolyzing] (534 aa).

The 191-residue stretch at 20 to 210 (PVLVIDFGAQ…LLVGAGCRPS (191 aa)) folds into the Glutamine amidotransferase type-1 domain. Cys97 (nucleophile) is an active-site residue. Active-site residues include His184 and Glu186. Residues 211 to 408 (WTMINIVEEA…LGLPEDIVWR (198 aa)) form the GMPS ATP-PPase domain. An ATP-binding site is contributed by 238–244 (SGGVDSA).

As to quaternary structure, homodimer.

The enzyme catalyses XMP + L-glutamine + ATP + H2O = GMP + L-glutamate + AMP + diphosphate + 2 H(+). The protein operates within purine metabolism; GMP biosynthesis; GMP from XMP (L-Gln route): step 1/1. Functionally, catalyzes the synthesis of GMP from XMP. This Parafrankia sp. (strain EAN1pec) protein is GMP synthase [glutamine-hydrolyzing].